The sequence spans 240 residues: Uridylate kinase (240 aa).

12 to 15 serves as a coordination point for ATP; the sequence is KLSG. An involved in allosteric activation by GTP region spans residues 20–25; it reads GEDGFG. Glycine 54 contacts UMP. The ATP site is built by glycine 55 and arginine 59. UMP contacts are provided by residues aspartate 74 and 135–142; that span reads TGNPYFST. ATP is bound by residues asparagine 163, tyrosine 169, and aspartate 172.

This sequence belongs to the UMP kinase family. Homohexamer.

It is found in the cytoplasm. The enzyme catalyses UMP + ATP = UDP + ADP. It functions in the pathway pyrimidine metabolism; CTP biosynthesis via de novo pathway; UDP from UMP (UMPK route): step 1/1. Allosterically activated by GTP. Probably inhibited by UTP. Its function is as follows. Catalyzes the reversible phosphorylation of UMP to UDP. The chain is Uridylate kinase (pyrH) from Enterococcus faecalis (strain ATCC 700802 / V583).